The sequence spans 255 residues: MALNLLTVPCLKDNFAFLLHDAASGRTALVDAPEAAPVLSALAAQGWRLTDILLTHHHDDHIQAVPEIHAATGARVHGAAADAHRLPPLDHALREGDRVAIGAESAVVIDVPGHTRGHIAFHFPGSALAFTGDSLMAAGCGRLFEGTPAEMWASLSKLAALPPETLICSGHDYLDGNLRFALALEPGNPALISRQGRLSEMRREGRLPMPWTLAEELATNPFLRAPLPQMKAAVGLPQASDTVVFAEIRARKDLF.

Residues H56, H58, D60, H61, H114, D133, and H171 each coordinate Zn(2+).

This sequence belongs to the metallo-beta-lactamase superfamily. Glyoxalase II family. In terms of assembly, monomer. The cofactor is Zn(2+).

It catalyses the reaction an S-(2-hydroxyacyl)glutathione + H2O = a 2-hydroxy carboxylate + glutathione + H(+). Its pathway is secondary metabolite metabolism; methylglyoxal degradation; (R)-lactate from methylglyoxal: step 2/2. Its function is as follows. Thiolesterase that catalyzes the hydrolysis of S-D-lactoyl-glutathione to form glutathione and D-lactic acid. The chain is Hydroxyacylglutathione hydrolase from Fuscovulum blasticum (Rhodobacter blasticus).